Consider the following 176-residue polypeptide: MTTIVSVRRNGQVVIGGDGQATMGNTVMKGNVRKVRRLYNDKVIAGFAGGTADAFTLFELFERKLELHQGHLTKAAVELAKDWRTDRMLRKLEALLAVADETTSLIITGNGDVVQPENDLIAIGSGGPYAQAAARAMLENTDLSAREIAEKALNIAGDICIYTNHNVNFEEISSKE.

T2 is an active-site residue. Na(+) contacts are provided by G157, C160, and T163.

The protein belongs to the peptidase T1B family. HslV subfamily. As to quaternary structure, a double ring-shaped homohexamer of HslV is capped on each side by a ring-shaped HslU homohexamer. The assembly of the HslU/HslV complex is dependent on binding of ATP.

Its subcellular location is the cytoplasm. The catalysed reaction is ATP-dependent cleavage of peptide bonds with broad specificity.. Allosterically activated by HslU binding. Protease subunit of a proteasome-like degradation complex believed to be a general protein degrading machinery. This is ATP-dependent protease subunit HslV from Proteus mirabilis (strain HI4320).